A 117-amino-acid chain; its full sequence is Immunoglobulin lambda variable 1-44 (117 aa).

The N-terminal stretch at 1 to 19 (MASFPLLLTLLTHCAGSWA) is a signal peptide. Residue Gln-20 is modified to Pyrrolidone carboxylic acid. The segment at 20-44 (QSVLTQPPSASGTPGQRVTISCSGS) is framework-1. An Ig-like domain is found at 20-117 (QSVLTQPPSA…CAAWDDSLNG (98 aa)). The span at 24 to 35 (TQPPSASGTPGQ) shows a compositional bias: polar residues. The disordered stretch occupies residues 24–45 (TQPPSASGTPGQRVTISCSGSS). A disulfide bridge links Cys-41 with Cys-108. The segment at 45 to 52 (SSNIGSNT) is complementarity-determining-1. The segment at 53-69 (VNWYQQLPGTAPKLLIY) is framework-2. Residues 70–72 (SNN) are complementarity-determining-2. Residues 73-108 (QRPSGVPDRFSGSKSGTSASLAISGLQSEDEADYYC) form a framework-3 region. Positions 109 to 117 (AAWDDSLNG) are complementarity-determining-3.

As to quaternary structure, immunoglobulins are composed of two identical heavy chains and two identical light chains; disulfide-linked.

The protein localises to the secreted. It localises to the cell membrane. Functionally, v region of the variable domain of immunoglobulin light chains that participates in the antigen recognition. Immunoglobulins, also known as antibodies, are membrane-bound or secreted glycoproteins produced by B lymphocytes. In the recognition phase of humoral immunity, the membrane-bound immunoglobulins serve as receptors which, upon binding of a specific antigen, trigger the clonal expansion and differentiation of B lymphocytes into immunoglobulins-secreting plasma cells. Secreted immunoglobulins mediate the effector phase of humoral immunity, which results in the elimination of bound antigens. The antigen binding site is formed by the variable domain of one heavy chain, together with that of its associated light chain. Thus, each immunoglobulin has two antigen binding sites with remarkable affinity for a particular antigen. The variable domains are assembled by a process called V-(D)-J rearrangement and can then be subjected to somatic hypermutations which, after exposure to antigen and selection, allow affinity maturation for a particular antigen. The polypeptide is Immunoglobulin lambda variable 1-44 (Homo sapiens (Human)).